A 139-amino-acid polypeptide reads, in one-letter code: Proline-rich protein 13 (139 aa).

Residues 1 to 139 (MWNPSAGPNP…SSSSSSSDSD (139 aa)) are disordered. Composition is skewed to pro residues over residues 24–62 (ACPP…PQPG) and 70–91 (GPYP…PPAP). The segment covering 103-124 (KTRKKMKKAHKKSHKHHKHGKH) has biased composition (basic residues). The segment covering 125-139 (SSSSSSSSSSSSDSD) has biased composition (low complexity).

It localises to the nucleus. In terms of biological role, negatively regulates TSP1 expression at the level of transcription. This down-regulation was shown to reduce taxane-induced apoptosis. This Rattus norvegicus (Rat) protein is Proline-rich protein 13 (Prr13).